Consider the following 79-residue polypeptide: Succinate dehydrogenase assembly factor 1, mitochondrial (79 aa).

This sequence belongs to the complex I LYR family. SDHAF1 subfamily. In terms of assembly, interacts with SDH2 within an SDH1-SDH2 subcomplex.

The protein localises to the mitochondrion matrix. Plays an essential role in the assembly of succinate dehydrogenase (SDH), an enzyme complex (also referred to as respiratory complex II) that is a component of both the tricarboxylic acid (TCA) cycle and the mitochondrial electron transport chain, and which couples the oxidation of succinate to fumarate with the reduction of ubiquinone (coenzyme Q) to ubiquinol. Promotes maturation of the iron-sulfur protein subunit SDH2 of the SDH catalytic dimer, protecting it from the deleterious effects of oxidants. Acts together with SDHAF3 (SDH7). The sequence is that of Succinate dehydrogenase assembly factor 1, mitochondrial from Saccharomyces cerevisiae (strain YJM789) (Baker's yeast).